The primary structure comprises 451 residues: MKTNSEIENRMQDIEYALLGKALVFEDCTEYILRQLVNYEFKCSRHKNIFIVFKHLKDNALPITVDSAWEELLRRRVKDIDKSYLGIMLHDAMFNDKLRPISHTVLLDDLSVCSAEENLTNFIFRSFNEYNENPLRRSPFLLLDRIKDRLDRTIAKTFSTRSVRGRSVYDIFSQAELGVLARIKKRRAAYSENNDSFYDGLPTGYQDIDSKGVILANGNFVIIAARPSIGKTALAIDIAINIAIHQRRRVGFLSLEMSAGQIVERIISNLTGVSGEKLQRGSLSEEEIFCIEEAGNTIRDSHLYICSDNQYKLNLIANQIRLLKRDDRVDVIFIDYLQLINSSVGENRQNEIADISRTLRGLAAELNIPIVCLSQLSRKVEDRANKVPMLSDLRDSGQIEQDADVILFINRKETSPNCEITVGKNRHGSVFSTVLQFDPKTSKFSAIKKVW.

In terms of domain architecture, SF4 helicase spans 194 to 451 (NDSFYDGLPT…SKFSAIKKVW (258 aa)). 225 to 232 (ARPSIGKT) lines the ATP pocket.

Belongs to the helicase family. DnaB subfamily. Homohexamer.

It catalyses the reaction Couples ATP hydrolysis with the unwinding of duplex DNA at the replication fork by translocating in the 5'-3' direction. This creates two antiparallel DNA single strands (ssDNA). The leading ssDNA polymer is the template for DNA polymerase III holoenzyme which synthesizes a continuous strand.. The enzyme catalyses ATP + H2O = ADP + phosphate + H(+). In terms of biological role, a replicative DNA helicase, it participates in initiation and elongation during DNA replication. Travels ahead of the DNA replisome, separating dsDNA into templates for DNA synthesis. A processive ATP-dependent 5'-3' DNA helicase it has DNA-dependent ATPase activity. In Chlamydia muridarum (strain MoPn / Nigg), this protein is Probable plasmid replicative DNA helicase.